The sequence spans 616 residues: Sulfite reductase [NADPH] flavoprotein alpha-component (616 aa).

The region spanning 80-218 (LTIIFASQTG…SAAQWRKQAL (139 aa)) is the Flavodoxin-like domain. FMN contacts are provided by residues 86–91 (SQTGNA), 133–136 (STNG), and 169–178 (LGDSSYEFFC). The 215-residue stretch at 251-465 (QKPYAATLLT…VENNNNFKLP (215 aa)) folds into the FAD-binding FR-type domain. FAD contacts are provided by residues threonine 339, glycine 373, 403–406 (RLYS), 421–423 (TVG), tyrosine 427, and 436–439 (GGAS). Residues 536–537 (SR), 542–546 (KVYVQ), and aspartate 578 each bind NADP(+). Tyrosine 616 is a binding site for FAD.

It belongs to the NADPH-dependent sulphite reductase flavoprotein subunit CysJ family. The protein in the N-terminal section; belongs to the flavodoxin family. This sequence in the C-terminal section; belongs to the flavoprotein pyridine nucleotide cytochrome reductase family. Alpha(8)-beta(8). The alpha component is a flavoprotein, the beta component is a hemoprotein. FAD is required as a cofactor. It depends on FMN as a cofactor.

It catalyses the reaction hydrogen sulfide + 3 NADP(+) + 3 H2O = sulfite + 3 NADPH + 4 H(+). It functions in the pathway sulfur metabolism; hydrogen sulfide biosynthesis; hydrogen sulfide from sulfite (NADPH route): step 1/1. Functionally, component of the sulfite reductase complex that catalyzes the 6-electron reduction of sulfite to sulfide. This is one of several activities required for the biosynthesis of L-cysteine from sulfate. The flavoprotein component catalyzes the electron flow from NADPH -&gt; FAD -&gt; FMN to the hemoprotein component. This Vibrio vulnificus (strain CMCP6) protein is Sulfite reductase [NADPH] flavoprotein alpha-component.